A 97-amino-acid polypeptide reads, in one-letter code: Mapk-regulated corepressor-interacting protein 1 (97 aa).

Disordered stretches follow at residues 1–29 and 72–97; these read MTSS…NEIF and SNSL…PKKS. A compositionally biased stretch (polar residues) spans 17–28; it reads ASNTRSPSSNEI. Residues 82–97 show a composition bias toward basic and acidic residues; that stretch reads DLNDLKRRTVQDPKKS.

The protein belongs to the MCRIP family.

The protein resides in the nucleus. It is found in the cytoplasm. The protein localises to the stress granule. May play a role in the regulation of the epithelial-mesenchymal transition. This chain is Mapk-regulated corepressor-interacting protein 1 (Mcrip1), found in Xenopus tropicalis (Western clawed frog).